Here is a 206-residue protein sequence, read N- to C-terminus: Glutathione S-transferase 1 (206 aa).

The GST N-terminal domain occupies 2–79 (PQYKLTYFDI…YLGRQFGLAG (78 aa)). Residues Tyr-8, Trp-39, Lys-43, 49–51 (GQL), and 63–64 (QS) each bind glutathione. The 126-residue stretch at 81–206 (TPMEEAQVDS…WIAERPKTPY (126 aa)) folds into the GST C-terminal domain.

This sequence belongs to the GST superfamily. Sigma family.

The enzyme catalyses RX + glutathione = an S-substituted glutathione + a halide anion + H(+). Conjugation of reduced glutathione to a wide number of exogenous and endogenous hydrophobic electrophiles. Can also function as a GSH peroxidase. This Ascaris suum (Pig roundworm) protein is Glutathione S-transferase 1 (GST1).